The primary structure comprises 108 residues: Long neurotoxin 43 (108 aa).

A signal peptide spans 1–21 (MKTLLLTLVVVTIVCLDLAYT). Cystine bridges form between Cys24–Cys42, Cys35–Cys63, Cys48–Cys52, Cys67–Cys78, and Cys79–Cys84.

It belongs to the three-finger toxin family. Long-chain subfamily. Type II alpha-neurotoxin sub-subfamily. In terms of tissue distribution, expressed by the venom gland.

The protein localises to the secreted. Its function is as follows. Binds with high affinity to muscular (alpha-1/CHRNA1) and neuronal (alpha-7/CHRNA7) nicotinic acetylcholine receptor (nAChR) and inhibits acetylcholine from binding to the receptor, thereby impairing neuromuscular and neuronal transmission. In Drysdalia coronoides (White-lipped snake), this protein is Long neurotoxin 43.